A 799-amino-acid polypeptide reads, in one-letter code: DISARM protein DrmE (799 aa).

It localises to the cytoplasm. Component of antiviral defense system DISARM (defense island system associated with restriction-modification), composed of DrmE, DrmA, DrmB, DrmC and DrmMII. DISARM is probably a multi-gene restriction module, this subunit has an unknown function. Expression of DISARM in B.subtilis (strain BEST7003) confers resistance to phages Nf, phi29, phi105, phi3T, SPO1, SPR and SPP1. Protection is over 10(7)-fold against phi3T, 10(4)-10(5)-fold against Nf, phi29, phi105 and SPR, 100-fold against SPO1 and 10-fold against SPP1. DISARM does not interfere with phage adsorption, but instead interferes with (phi3T) DNA replication early in its cycle, preventing replication, circularization and lysogeny and probably causes phage DNA degradation (DNA is degraded in SPP1-infected cells). The polypeptide is DISARM protein DrmE (Bacillus paralicheniformis (strain ATCC 9945a / NCIMB 11709 / CD-2)).